The sequence spans 248 residues: Tropomyosin alpha-4 chain (248 aa).

At Ala2 the chain carries N-acetylalanine. A coiled-coil region spans residues 2–248 (AGLNSLEAVK…DQTLDELNCI (247 aa)). Phosphoserine is present on Ser6. The segment at 16-47 (ALQQQADEAEDRAQGLQRELDGERERREKAEG) is disordered. Basic and acidic residues predominate over residues 33 to 47 (RELDGERERREKAEG). N6-acetyllysine is present on residues Lys177 and Lys215. Phosphothreonine is present on Thr216.

This sequence belongs to the tropomyosin family. In terms of assembly, homodimer. Heterodimer of an alpha (TPM1, TPM3 or TPM4) and a beta (TPM2) chain.

Its subcellular location is the cytoplasm. The protein resides in the cytoskeleton. Binds to actin filaments in muscle and non-muscle cells. Plays a central role, in association with the troponin complex, in the calcium dependent regulation of vertebrate striated muscle contraction. Smooth muscle contraction is regulated by interaction with caldesmon. In non-muscle cells is implicated in stabilizing cytoskeleton actin filaments. Binds calcium. The protein is Tropomyosin alpha-4 chain (TPM4) of Equus caballus (Horse).